The sequence spans 256 residues: Triosephosphate isomerase (256 aa).

9 to 11 (NWK) is a binding site for substrate. Histidine 97 functions as the Electrophile in the catalytic mechanism. Glutamate 169 functions as the Proton acceptor in the catalytic mechanism. Residues glycine 175, serine 214, and 235 to 236 (GG) each bind substrate.

Belongs to the triosephosphate isomerase family. Homodimer.

It localises to the cytoplasm. The catalysed reaction is D-glyceraldehyde 3-phosphate = dihydroxyacetone phosphate. It functions in the pathway carbohydrate biosynthesis; gluconeogenesis. The protein operates within carbohydrate degradation; glycolysis; D-glyceraldehyde 3-phosphate from glycerone phosphate: step 1/1. Involved in the gluconeogenesis. Catalyzes stereospecifically the conversion of dihydroxyacetone phosphate (DHAP) to D-glyceraldehyde-3-phosphate (G3P). The sequence is that of Triosephosphate isomerase from Vibrio parahaemolyticus serotype O3:K6 (strain RIMD 2210633).